A 504-amino-acid polypeptide reads, in one-letter code: Glutamate--tRNA ligase (504 aa).

A 'HIGH' region motif is present at residues 12 to 22 (PSPTGALHIGG). The 'KMSKS' region signature appears at 260 to 264 (KLSKR). K263 is a binding site for ATP.

Belongs to the class-I aminoacyl-tRNA synthetase family. Glutamate--tRNA ligase type 1 subfamily. Monomer.

The protein resides in the cytoplasm. It catalyses the reaction tRNA(Glu) + L-glutamate + ATP = L-glutamyl-tRNA(Glu) + AMP + diphosphate. Functionally, catalyzes the attachment of glutamate to tRNA(Glu) in a two-step reaction: glutamate is first activated by ATP to form Glu-AMP and then transferred to the acceptor end of tRNA(Glu). This is Glutamate--tRNA ligase from Bacteroides thetaiotaomicron (strain ATCC 29148 / DSM 2079 / JCM 5827 / CCUG 10774 / NCTC 10582 / VPI-5482 / E50).